The primary structure comprises 137 residues: Proofreading thioesterase EntH (137 aa).

Glutamate 63 (nucleophile or proton acceptor) is an active-site residue.

Belongs to the thioesterase PaaI family. Homotetramer. Dimer of dimers. Interacts specifically with the aryl carrier protein (ArCP) domain of EntB.

The protein resides in the cytoplasm. It participates in siderophore biosynthesis; enterobactin biosynthesis. Its function is as follows. Required for optimal enterobactin synthesis. Acts as a proofreading enzyme that prevents EntB misacylation by hydrolyzing the thioester bound existing between EntB and wrongly charged molecules. In Shigella sonnei (strain Ss046), this protein is Proofreading thioesterase EntH.